The following is a 190-amino-acid chain: Adenine phosphoribosyltransferase (190 aa).

Belongs to the purine/pyrimidine phosphoribosyltransferase family. As to quaternary structure, homodimer.

The protein localises to the cytoplasm. It carries out the reaction AMP + diphosphate = 5-phospho-alpha-D-ribose 1-diphosphate + adenine. The protein operates within purine metabolism; AMP biosynthesis via salvage pathway; AMP from adenine: step 1/1. Functionally, catalyzes a salvage reaction resulting in the formation of AMP, that is energically less costly than de novo synthesis. This is Adenine phosphoribosyltransferase from Treponema pallidum (strain Nichols).